A 100-amino-acid polypeptide reads, in one-letter code: Urease subunit gamma (100 aa).

It belongs to the urease gamma subunit family. In terms of assembly, heterotrimer of UreA (gamma), UreB (beta) and UreC (alpha) subunits. Three heterotrimers associate to form the active enzyme.

The protein resides in the cytoplasm. The enzyme catalyses urea + 2 H2O + H(+) = hydrogencarbonate + 2 NH4(+). It participates in nitrogen metabolism; urea degradation; CO(2) and NH(3) from urea (urease route): step 1/1. The polypeptide is Urease subunit gamma (Polaromonas naphthalenivorans (strain CJ2)).